The primary structure comprises 334 residues: D-fructose 1,6-bisphosphatase class 2/sedoheptulose 1,7-bisphosphatase (334 aa).

Residues Asp-33, Glu-57, Asp-85, and Glu-88 each contribute to the Mn(2+) site. Substrate is bound by residues 88 to 90, Tyr-119, 164 to 166, and 186 to 188; these read EGT, RAR, and DGD. Position 213 (Glu-213) interacts with Mn(2+).

It belongs to the FBPase class 2 family. In terms of assembly, homotetramer. Requires Mn(2+) as cofactor.

It carries out the reaction beta-D-fructose 1,6-bisphosphate + H2O = beta-D-fructose 6-phosphate + phosphate. It catalyses the reaction D-sedoheptulose 1,7-bisphosphate + H2O = D-sedoheptulose 7-phosphate + phosphate. It functions in the pathway carbohydrate biosynthesis; Calvin cycle. Catalyzes the hydrolysis of fructose 1,6-bisphosphate (Fru 1,6-P2) and sedoheptulose 1,7-bisphosphate (Sed 1,7-P2) to fructose 6-phosphate and sedoheptulose 7-phosphate, respectively. This chain is D-fructose 1,6-bisphosphatase class 2/sedoheptulose 1,7-bisphosphatase, found in Parasynechococcus marenigrum (strain WH8102).